A 288-amino-acid chain; its full sequence is T-lymphocyte activation antigen CD80 (288 aa).

The signal sequence occupies residues 1 to 34 (MGHTRRQGTSPSKCPYLNFFQLLVLAGLSHFCSG). The Ig-like V-type domain maps to 35–135 (VIHVTKEVKE…FKREHLAEVT (101 aa)). The Extracellular portion of the chain corresponds to 35 to 242 (VIHVTKEVKE…TTKQEHFPDN (208 aa)). 2 cysteine pairs are disulfide-bonded: Cys-50/Cys-116 and Cys-162/Cys-216. Asn-53, Asn-89, Asn-98, Asn-186, Asn-207, Asn-211, Asn-226, and Asn-232 each carry an N-linked (GlcNAc...) asparagine glycan. In terms of domain architecture, Ig-like C2-type spans 145 to 230 (PSISDFEIPT…GHLRVNQTFN (86 aa)). The helical transmembrane segment at 243–263 (LLPSWAITLISVNGIFVICCL) threads the bilayer. Residues Cys-261, Cys-262, Cys-266, and Cys-271 are each lipidated (S-palmitoyl cysteine). The Cytoplasmic portion of the chain corresponds to 264–288 (TYCFAPRCRERRRNERLRRESVRPV). Ser-284 carries the phosphoserine modification.

As to quaternary structure, homodimer. Interacts with CTLA4; this interaction inhibits T-cell activation. Interacts with PDL1/CD274; this interaction blocks PDL1/PDCD1 binding and thus PDL1/CD274 inhibitory function. Interacts with CD28. (Microbial infection) Interacts with adenovirus subgroup B fiber proteins. In terms of assembly, (Microbial infection) Interacts with Orthopoxvirus OPG038/M2 protein, inhibiting the interaction with CTLA4/CD152. In terms of processing, palmitoylated by ZDHHC20; palmitoylation protects CD80 from ubiquitin-mediated degradation, regulating the protein stability, and ensures its accurate plasma membrane localization. In terms of tissue distribution, expressed on activated B-cells, macrophages and dendritic cells.

The protein resides in the cell membrane. Costimulatory molecule that belongs to the immunoglobulin superfamily that plays an important role in T-lymphocyte activation. Acts as the primary auxiliary signal augmenting the MHC/TCR signal in naive T-cells together with the CD28 receptor which is constitutively expressed on the cell surface of T-cells. In turn, activates different signaling pathways such as NF-kappa-B or MAPK leading to the production of different cytokines. In addition, CD28/CD80 costimulatory signal stimulates glucose metabolism and ATP synthesis of T-cells by activating the PI3K/Akt signaling pathway. Also acts as a regulator of PDL1/PDCD1 interactions to limit excess engagement of PDL1 and its inhibitory role in immune responses. Expressed on B-cells, plays a critical role in regulating interactions between B-cells and T-cells in both early and late germinal center responses, which are crucial for the generation of effective humoral immune responses. Its function is as follows. (Microbial infection) Acts as a receptor for adenovirus subgroup B. The sequence is that of T-lymphocyte activation antigen CD80 (CD80) from Homo sapiens (Human).